Consider the following 590-residue polypeptide: MSSACDAGDHYPLHLLVWKNDYRQLEKELQGQNVEAVDPRGRTLLHLAVSLGHLESARVLLRHKADVTKENRQGWTVLHEAVSTGDPEMVYTVLQHRDYHNTSMALEGVPELLQKILEAPDFYVQMKWEFTSWVPLVSRICPNDVCRIWKSGAKLRVDITLLGFENMSWIRGRRSFIFKGEDNWAELMEVNHDDKVVTTERFDLSQEMERLTLDLMKPKSREVERRLTSPVINTSLDTKNIAFERTKSGFWGWRTDKAEVVNGYEAKVYTVNNVNVITKIRTEHLTEEEKKRYKADRNPLESLLGTVEHQFGAQGDLTTECATANNPTAITPDEYFNEEFDLKDRDIGRPKELTIRTQKFKAMLWMCEEFPLSLVEQVIPIIDLMARTSAHFARLRDFIKLEFPPGFPVKIEIPLFHVLNARITFGNVNGCSTAEESVSQNVEGTQADSASHITNFEVDQSVFEIPESYYVQDNGRNVHLQDEDYEIMQFAIQQSLLESSRSQELSGPASNGGISQTNTYDAQYERAIQESLLTSTEGLCPSALSETSRFDNDLQLAMELSAKELEEWELRLQEEEAELQQVLQLSLTDK.

ANK repeat units follow at residues 40–69 (RGRT…DVTK) and 73–102 (QGWT…YHNT). Ser205 is subject to Phosphoserine. UIM domains are found at residues 483-502 (EDYE…SSRS), 519-538 (TYDA…STEG), 549-568 (RFDN…LEEW), and 574-590 (EEEA…LTDK). The residue at position 586 (Ser586) is a Phosphoserine.

Interacts (via the UIM 3 and 4 repeats) with EGFR (ubiquitinated); the interaction is direct, inhibited by ANKRD13A monoubiquitination and may regulate EGFR internalization. Post-translationally, monoubiquitinated, inhibits interaction with ubiquitinated EGFR.

It is found in the cell membrane. The protein localises to the late endosome. Ubiquitin-binding protein that specifically recognizes and binds 'Lys-63'-linked ubiquitin. Does not bind 'Lys-48'-linked ubiquitin. Positively regulates the internalization of ligand-activated EGFR by binding to the Ub moiety of ubiquitinated EGFR at the cell membrane. In Homo sapiens (Human), this protein is Ankyrin repeat domain-containing protein 13A (ANKRD13A).